A 255-amino-acid chain; its full sequence is uncharacterized protein (255 aa).

The protein belongs to the methyltransferase superfamily.

This is an uncharacterized protein from Bacillus subtilis (strain 168).